Here is a 305-residue protein sequence, read N- to C-terminus: Probable GTP 3',8-cyclase (305 aa).

The region spanning 6–228 (NHRRPLVSLR…MTRKFMQDRK (223 aa)) is the Radical SAM core domain. Residue arginine 15 coordinates GTP. The [4Fe-4S] cluster site is built by cysteine 22 and cysteine 26. Tyrosine 28 is a binding site for S-adenosyl-L-methionine. Cysteine 29 is a binding site for [4Fe-4S] cluster. Arginine 62 serves as a coordination point for GTP. S-adenosyl-L-methionine is bound at residue glycine 66. Threonine 92 is a GTP binding site. Residue serine 116 participates in S-adenosyl-L-methionine binding. A GTP-binding site is contributed by lysine 153. [4Fe-4S] cluster is bound by residues cysteine 249 and cysteine 252. 254–256 (RLR) contributes to the GTP binding site. Position 266 (cysteine 266) interacts with [4Fe-4S] cluster.

The protein belongs to the radical SAM superfamily. MoaA family. The cofactor is [4Fe-4S] cluster.

The catalysed reaction is GTP + AH2 + S-adenosyl-L-methionine = (8S)-3',8-cyclo-7,8-dihydroguanosine 5'-triphosphate + 5'-deoxyadenosine + L-methionine + A + H(+). Its pathway is cofactor biosynthesis; molybdopterin biosynthesis. Functionally, catalyzes the cyclization of GTP to (8S)-3',8-cyclo-7,8-dihydroguanosine 5'-triphosphate. The protein is Probable GTP 3',8-cyclase of Methanothermobacter marburgensis (strain ATCC BAA-927 / DSM 2133 / JCM 14651 / NBRC 100331 / OCM 82 / Marburg) (Methanobacterium thermoautotrophicum).